We begin with the raw amino-acid sequence, 119 residues long: Large ribosomal subunit protein bL20 (119 aa).

Belongs to the bacterial ribosomal protein bL20 family.

Functionally, binds directly to 23S ribosomal RNA and is necessary for the in vitro assembly process of the 50S ribosomal subunit. It is not involved in the protein synthesizing functions of that subunit. The protein is Large ribosomal subunit protein bL20 of Alkaliphilus metalliredigens (strain QYMF).